A 204-amino-acid chain; its full sequence is Holliday junction branch migration complex subunit RuvA (204 aa).

A domain I region spans residues 1–63 (MIGKLSGKVD…EEHIHLYGFL (63 aa)). Residues 64 to 142 (TLEEKIFFNL…KISSGSAIIK (79 aa)) are domain II. Positions 143–149 (ESLNIKN) are flexible linker. A domain III region spans residues 150–204 (ITPVASNEVIKALVNLGFSRFEAQNAVQGIITQNPEISIDELIKTALKNRNSNFS).

This sequence belongs to the RuvA family. In terms of assembly, homotetramer. Forms an RuvA(8)-RuvB(12)-Holliday junction (HJ) complex. HJ DNA is sandwiched between 2 RuvA tetramers; dsDNA enters through RuvA and exits via RuvB. An RuvB hexamer assembles on each DNA strand where it exits the tetramer. Each RuvB hexamer is contacted by two RuvA subunits (via domain III) on 2 adjacent RuvB subunits; this complex drives branch migration. In the full resolvosome a probable DNA-RuvA(4)-RuvB(12)-RuvC(2) complex forms which resolves the HJ.

It is found in the cytoplasm. Its function is as follows. The RuvA-RuvB-RuvC complex processes Holliday junction (HJ) DNA during genetic recombination and DNA repair, while the RuvA-RuvB complex plays an important role in the rescue of blocked DNA replication forks via replication fork reversal (RFR). RuvA specifically binds to HJ cruciform DNA, conferring on it an open structure. The RuvB hexamer acts as an ATP-dependent pump, pulling dsDNA into and through the RuvAB complex. HJ branch migration allows RuvC to scan DNA until it finds its consensus sequence, where it cleaves and resolves the cruciform DNA. In Rickettsia rickettsii (strain Iowa), this protein is Holliday junction branch migration complex subunit RuvA.